Here is a 27-residue protein sequence, read N- to C-terminus: Omega-conotoxin RVIA (27 aa).

Cystine bridges form between cysteine 1/cysteine 16, cysteine 8/cysteine 19, and cysteine 15/cysteine 26. 2 positions are modified to 4-hydroxyproline: proline 4 and proline 7.

This sequence belongs to the conotoxin O1 superfamily. As to expression, expressed by the venom duct.

The protein localises to the secreted. Omega-conotoxins act at presynaptic membranes, they bind and block voltage-gated calcium channels (Cav). This Conus radiatus (Rayed cone) protein is Omega-conotoxin RVIA.